A 508-amino-acid polypeptide reads, in one-letter code: MKLAYWMYAGPAHIGTLRIASSFKNVHGIMHAPLGDDYFNVMRSMLERERDFTPVTASIVDRHVLARGSQEKVVDNIIRKDTEEHPDLIVLTPTCTSSILQEDLQNFVRRASLSTTADVLLADVNHYRVNELQAADRTLEQIVQFYIDKARRQGTLGTSKTPTPSVNIIGITTLGFHNQHDCRELKQLMADLGIQVNLVIPAAATVHDLQRLPQAWFNLVPYREIGGLTAQYLEREFGQPSVRITPMGVVETARCIRAIQGVLNAQGAGVNYEAFIEQQTREVSQAAWFSRSIDCQNLTGKKAVVFGDNTHAAAMTKILSREMGIHVVWAGTYCKYDADWFRAEVAGFCDEVLITDDHTVVGDAIARVEPAAIFGTQMERHVGKRLNIPCGVIAAPIHIQDFPVGYRPFLGYEGTNQLVDLIYNSFTLGMEDHLLEIFGGHDTKAVIHKGLSADSDLTWTAAGLAELNKIPGFVRGKVKRNTEKFAREQGISEITVEVLYAAKEAVGA.

Aspartate 36 contacts [4Fe-4S] cluster. Aspartate 294 acts as the Proton donor in catalysis. 429–430 provides a ligand contact to substrate; sequence GM.

It belongs to the ChlB/BchB/BchZ family. Protochlorophyllide reductase is composed of three subunits; ChlL, ChlN and ChlB. Forms a heterotetramer of two ChlB and two ChlN subunits. [4Fe-4S] cluster is required as a cofactor.

The catalysed reaction is chlorophyllide a + oxidized 2[4Fe-4S]-[ferredoxin] + 2 ADP + 2 phosphate = protochlorophyllide a + reduced 2[4Fe-4S]-[ferredoxin] + 2 ATP + 2 H2O. It functions in the pathway porphyrin-containing compound metabolism; chlorophyll biosynthesis (light-independent). Its function is as follows. Component of the dark-operative protochlorophyllide reductase (DPOR) that uses Mg-ATP and reduced ferredoxin to reduce ring D of protochlorophyllide (Pchlide) to form chlorophyllide a (Chlide). This reaction is light-independent. The NB-protein (ChlN-ChlB) is the catalytic component of the complex. In Thermosynechococcus vestitus (strain NIES-2133 / IAM M-273 / BP-1), this protein is Light-independent protochlorophyllide reductase subunit B.